Here is a 523-residue protein sequence, read N- to C-terminus: Glutamate--cysteine ligase, chloroplastic (523 aa).

A disulfide bond links Cys187 and Cys407.

The protein belongs to the carboxylate-amine ligase family. Glutamate--cysteine ligase type 2 subfamily. As to quaternary structure, homodimer or monomer when oxidized or reduced, respectively. Post-translationally, the Cys-187-Cys-407 disulfide bridge is known to modulate the enzyme activity according to the redox status. The oxidized form constitutes the active enzyme.

Its subcellular location is the plastid. It localises to the chloroplast. The enzyme catalyses L-cysteine + L-glutamate + ATP = gamma-L-glutamyl-L-cysteine + ADP + phosphate + H(+). It functions in the pathway sulfur metabolism; glutathione biosynthesis; glutathione from L-cysteine and L-glutamate: step 1/2. The chain is Glutamate--cysteine ligase, chloroplastic (GSH1) from Solanum lycopersicum (Tomato).